The following is a 98-amino-acid chain: UPF0213 protein LACR_2011 (98 aa).

The region spanning 2 to 79 is the GIY-YIG domain; the sequence is NTHFTYVLQC…KLVRQQKLKL (78 aa).

Belongs to the UPF0213 family.

The chain is UPF0213 protein LACR_2011 from Lactococcus lactis subsp. cremoris (strain SK11).